The following is a 403-amino-acid chain: Arginine biosynthesis bifunctional protein ArgJ (403 aa).

The segment covering 1–11 (MVQSVLSSTSH) has biased composition (polar residues). The interval 1–21 (MVQSVLSSTSHGSERADMSAA) is disordered. Residues Thr161, Lys183, Thr194, Glu273, Asn398, and Thr403 each coordinate substrate. Thr194 acts as the Nucleophile in catalysis.

This sequence belongs to the ArgJ family. As to quaternary structure, heterotetramer of two alpha and two beta chains.

Its subcellular location is the cytoplasm. The catalysed reaction is N(2)-acetyl-L-ornithine + L-glutamate = N-acetyl-L-glutamate + L-ornithine. The enzyme catalyses L-glutamate + acetyl-CoA = N-acetyl-L-glutamate + CoA + H(+). The protein operates within amino-acid biosynthesis; L-arginine biosynthesis; L-ornithine and N-acetyl-L-glutamate from L-glutamate and N(2)-acetyl-L-ornithine (cyclic): step 1/1. It functions in the pathway amino-acid biosynthesis; L-arginine biosynthesis; N(2)-acetyl-L-ornithine from L-glutamate: step 1/4. Catalyzes two activities which are involved in the cyclic version of arginine biosynthesis: the synthesis of N-acetylglutamate from glutamate and acetyl-CoA as the acetyl donor, and of ornithine by transacetylation between N(2)-acetylornithine and glutamate. This chain is Arginine biosynthesis bifunctional protein ArgJ, found in Rhodococcoides fascians (Rhodococcus fascians).